Here is a 212-residue protein sequence, read N- to C-terminus: ATP phosphoribosyltransferase (212 aa).

It belongs to the ATP phosphoribosyltransferase family. Short subfamily. As to quaternary structure, heteromultimer composed of HisG and HisZ subunits.

It is found in the cytoplasm. It carries out the reaction 1-(5-phospho-beta-D-ribosyl)-ATP + diphosphate = 5-phospho-alpha-D-ribose 1-diphosphate + ATP. It participates in amino-acid biosynthesis; L-histidine biosynthesis; L-histidine from 5-phospho-alpha-D-ribose 1-diphosphate: step 1/9. Functionally, catalyzes the condensation of ATP and 5-phosphoribose 1-diphosphate to form N'-(5'-phosphoribosyl)-ATP (PR-ATP). Has a crucial role in the pathway because the rate of histidine biosynthesis seems to be controlled primarily by regulation of HisG enzymatic activity. The polypeptide is ATP phosphoribosyltransferase (Citrifermentans bemidjiense (strain ATCC BAA-1014 / DSM 16622 / JCM 12645 / Bem) (Geobacter bemidjiensis)).